A 373-amino-acid polypeptide reads, in one-letter code: Velvet complex subunit RYP3 (373 aa).

A compositionally biased stretch (basic and acidic residues) spans 1–10 (MYTLKQDRPH). Disordered stretches follow at residues 1-26 (MYTL…LQHG) and 344-373 (RKDG…ENEG). The Velvet domain maps to 48 to 344 (VYEGRIYSLD…AFQGIKIPIR (297 aa)). The segment covering 364–373 (GEGEDWENEG) has biased composition (acidic residues).

Belongs to the velvet family. VelB subfamily. As to quaternary structure, component of the heterotrimeric velvet complex composed of LAE1, VEL1 and VEL2; VEL1A acting as a bridging protein between LAE1 and VEL2. Forms a heterodimeric complex with VOS1; the formation of the VEL2-VOS1 complex is light-dependent.

The protein resides in the nucleus. It localises to the cytoplasm. Functionally, component of the velvet transcription factor complex that controls sexual/asexual developmental ratio in response to light, promoting sexual development in the darkness while stimulating asexual sporulation under illumination. The velvet complex acts as a global regulator for secondary metabolite gene expression. Component of the RYP2-RYP3 heterodimeric complex that plays a dual role in activating genes associated with spore maturation and repressing certain development-associated genes. The complex binds DNA through the DNA-binding domain of RYP2 that recognizes an 11-nucleotide consensus sequence 5'-CTGGCCGCGGC-3' consisting of two motifs in the promoters of key developmental regulatory genes. Required for viable spore production and regulation of sporulation in response to temperature, as well as for the switch to yeast-form in the presence of host cells. This chain is Velvet complex subunit RYP3 (RYP3), found in Ajellomyces capsulatus (Darling's disease fungus).